A 388-amino-acid polypeptide reads, in one-letter code: MSVIKMTDLDLRGKRVLIREDLNVPVKNGKVTSDARIQAALPTIKLAMEQGAKVMVMSHLGRPEEGQFSEENSMQPVGAHLSSLLGHDVPVVRDYLDGDFEVEEGGLVLFENVRFNVGEGKDNEELSKKYAALCDIFVMDAFGTAHRAQASTHGVAKFAPVACAGPLLAAELEALGQALDKPQRPMVAIVAGSKVSTKLDVLNSLSEVCDQLIVGGGIANTFLAAADHKVGKSLCEMDLLDTARSIAAKVQIPLPTDVVTAKAFSESAEASVKPIAEVTDDDMILDIGPQSAAALAELLKSAKTILWNGPVGVFEFDQFGDGTKTLAQAIAESDAFSIAGGGDTLAAIDKYGVSEKISYISTGGGAFLEFVEGKTLPAVAMLQKRAAE.

Residues 21-23 (DLN), arginine 36, 59-62 (HLGR), arginine 114, and arginine 147 each bind substrate. ATP contacts are provided by residues lysine 198, glutamate 315, and 341–344 (GGDT).

This sequence belongs to the phosphoglycerate kinase family. As to quaternary structure, monomer.

The protein resides in the cytoplasm. The enzyme catalyses (2R)-3-phosphoglycerate + ATP = (2R)-3-phospho-glyceroyl phosphate + ADP. It functions in the pathway carbohydrate degradation; glycolysis; pyruvate from D-glyceraldehyde 3-phosphate: step 2/5. In Hahella chejuensis (strain KCTC 2396), this protein is Phosphoglycerate kinase.